We begin with the raw amino-acid sequence, 674 residues long: DNA mismatch repair protein MutL (674 aa).

It belongs to the DNA mismatch repair MutL/HexB family.

This protein is involved in the repair of mismatches in DNA. It is required for dam-dependent methyl-directed DNA mismatch repair. May act as a 'molecular matchmaker', a protein that promotes the formation of a stable complex between two or more DNA-binding proteins in an ATP-dependent manner without itself being part of a final effector complex. The protein is DNA mismatch repair protein MutL of Clostridium perfringens (strain 13 / Type A).